A 61-amino-acid polypeptide reads, in one-letter code: Photosystem II reaction center protein Z (61 aa).

2 consecutive transmembrane segments (helical) span residues 8–28 and 41–61; these read ALLV…VLFS and LVGS…SFFK.

The protein belongs to the PsbZ family. PSII is composed of 1 copy each of membrane proteins PsbA, PsbB, PsbC, PsbD, PsbE, PsbF, PsbH, PsbI, PsbJ, PsbK, PsbL, PsbM, PsbT, PsbX, PsbY, PsbZ, Psb30/Ycf12, peripheral proteins PsbO, CyanoQ (PsbQ), PsbU, PsbV and a large number of cofactors. It forms dimeric complexes.

Its subcellular location is the cellular thylakoid membrane. Its function is as follows. May control the interaction of photosystem II (PSII) cores with the light-harvesting antenna, regulates electron flow through the 2 photosystem reaction centers. PSII is a light-driven water plastoquinone oxidoreductase, using light energy to abstract electrons from H(2)O, generating a proton gradient subsequently used for ATP formation. This chain is Photosystem II reaction center protein Z, found in Synechococcus sp. (strain JA-3-3Ab) (Cyanobacteria bacterium Yellowstone A-Prime).